We begin with the raw amino-acid sequence, 239 residues long: 1-(5-phosphoribosyl)-5-[(5-phosphoribosylamino)methylideneamino] imidazole-4-carboxamide isomerase (239 aa).

Catalysis depends on aspartate 8, which acts as the Proton acceptor. The Proton donor role is filled by aspartate 129.

Belongs to the HisA/HisF family.

The protein localises to the cytoplasm. The catalysed reaction is 1-(5-phospho-beta-D-ribosyl)-5-[(5-phospho-beta-D-ribosylamino)methylideneamino]imidazole-4-carboxamide = 5-[(5-phospho-1-deoxy-D-ribulos-1-ylimino)methylamino]-1-(5-phospho-beta-D-ribosyl)imidazole-4-carboxamide. Its pathway is amino-acid biosynthesis; L-histidine biosynthesis; L-histidine from 5-phospho-alpha-D-ribose 1-diphosphate: step 4/9. In Legionella pneumophila (strain Paris), this protein is 1-(5-phosphoribosyl)-5-[(5-phosphoribosylamino)methylideneamino] imidazole-4-carboxamide isomerase.